The sequence spans 311 residues: Pyrimidine-specific ribonucleoside hydrolase RihA (311 aa).

H240 is a catalytic residue.

It belongs to the IUNH family. RihA subfamily.

Its function is as follows. Hydrolyzes cytidine or uridine to ribose and cytosine or uracil, respectively. In Salmonella paratyphi C (strain RKS4594), this protein is Pyrimidine-specific ribonucleoside hydrolase RihA.